Reading from the N-terminus, the 1062-residue chain is 3-hydroxy-3-methylglutaryl-coenzyme A reductase 2 (1062 aa).

Residues 1-34 (MAPTNTKDSDTPGWLHRHGTSVLGSVARQACKQP) are Cytoplasmic-facing. The chain crosses the membrane as a helical span at residues 35 to 55 (IYTLVITALLATMTYTSLLEG). Residues 56 to 230 (SLYNANLTRL…SFVGLIKHAQ (175 aa)) are Lumenal-facing. Asparagine 61 carries N-linked (GlcNAc...) asparagine glycosylation. A helical transmembrane segment spans residues 231-251 (IIDIIIMLLAYLAMHLTFLSL). Positions 233–403 (DIIIMLLAYL…FTFYISVLCV (171 aa)) constitute an SSD domain. Residues 252–261 (FMSMRQLGSR) lie on the Cytoplasmic side of the membrane. A helical transmembrane segment spans residues 262–282 (FWLAYSVLLSGFFSLFFGLKV). At 283–287 (TTSSG) the chain is on the lumenal side. A helical transmembrane segment spans residues 288 to 308 (VSTSMITLSECLPILVIIVGF). The Cytoplasmic portion of the chain corresponds to 309-355 (EKPIRLTRAVLRAATESYLPAKPMARRSTPEAIEVAIMREGWRIVRD). Residues 356–375 (YAIEIAILAAGATSRVQGAL) form a helical membrane-spanning segment. At 376-377 (PQ) the chain is on the lumenal side. A helical transmembrane segment spans residues 378–398 (FCFLAAWILLFDSLLLFTFYI). At 399 to 450 (SVLCVKLEITRIRKHVEPRRALEDDDISTGNQDFDSRVFGCKVKAANISRFK) the chain is on the cytoplasmic side. Residues 451–471 (FLMVGGFVLFNVLQLSSLTYG) form a helical membrane-spanning segment. Over 472 to 564 (NVRVSDWMPY…GCVLAWLEDP (93 aa)) the chain is Lumenal. An N-linked (GlcNAc...) asparagine glycan is attached at asparagine 484. Residues 565-585 (VISKWVIAALFLSLVLNSYLM) form a helical membrane-spanning segment. At 586-1062 (KAARWNLRQS…NRSKVAAKTG (477 aa)) the chain is on the cytoplasmic side. Residue glutamate 744 is the Charge relay system of the active site. 750–756 (SASRGCK) serves as a coordination point for CoA. Residues 811–813 (SRF) and 838–846 (DAMGMNMIS) each bind NADP(+). Lysine 877 serves as the catalytic Charge relay system. Residue 906–908 (VLK) participates in CoA binding. Residue aspartate 953 is the Charge relay system of the active site. 1048 to 1049 (AH) serves as a coordination point for CoA. Residue histidine 1049 is the Proton donor of the active site. NADP(+) is bound at residue 1053-1054 (NR).

This sequence belongs to the HMG-CoA reductase family.

It localises to the endoplasmic reticulum membrane. The catalysed reaction is (R)-mevalonate + 2 NADP(+) + CoA = (3S)-3-hydroxy-3-methylglutaryl-CoA + 2 NADPH + 2 H(+). Its pathway is metabolic intermediate biosynthesis; (R)-mevalonate biosynthesis; (R)-mevalonate from acetyl-CoA: step 3/3. HMG-CoA reductase; part of the first module of ergosterol biosynthesis pathway that includes the early steps of the pathway, conserved across all eukaryotes, and which results in the formation of mevalonate from acetyl-coenzyme A (acetyl-CoA). Hmg1 and hmg2 catalyze the reduction of hydroxymethylglutaryl-CoA (HMG-CoA) to mevalonate. The first module starts with the action of the cytosolic acetyl-CoA acetyltransferase erg10B that catalyzes the formation of acetoacetyl-CoA. The hydroxymethylglutaryl-CoA synthases erg13A and erg13B then condense acetyl-CoA with acetoacetyl-CoA to form HMG-CoA. The rate-limiting step of the early module is the reduction to mevalonate by the 3-hydroxy-3-methylglutaryl-coenzyme A (HMG-CoA) reductases hmg1 and hmg2. Mevalonate is also a precursor for the extracellular siderophore triacetylfusarinine C (TAFC). This is 3-hydroxy-3-methylglutaryl-coenzyme A reductase 2 from Aspergillus fumigatus (strain ATCC MYA-4609 / CBS 101355 / FGSC A1100 / Af293) (Neosartorya fumigata).